The chain runs to 135 residues: Small ribosomal subunit protein uS9 (135 aa).

The protein belongs to the universal ribosomal protein uS9 family.

The sequence is that of Small ribosomal subunit protein uS9 (rps9) from Archaeoglobus fulgidus (strain ATCC 49558 / DSM 4304 / JCM 9628 / NBRC 100126 / VC-16).